A 328-amino-acid polypeptide reads, in one-letter code: Transcription initiation factor IIB 4 (328 aa).

2 stretches are compositionally biased toward basic and acidic residues: residues 1-12 (MTNQRTTRDGSH) and 21-32 (RSRESTDEDHGC). A disordered region spans residues 1–47 (MTNQRTTRDGSHGTESVPTQRSRESTDEDHGCPECNGDLVTDEDRGE). The TFIIB-type zinc-finger motif lies at 28–58 (EDHGCPECNGDLVTDEDRGETTCGECGLVVE). Zn(2+) contacts are provided by cysteine 32, cysteine 35, cysteine 50, and cysteine 53. A run of 2 repeats spans residues 144–227 (GEIE…AREL) and 238–319 (SYVP…EILD).

Belongs to the TFIIB family.

In terms of biological role, stabilizes TBP binding to an archaeal box-A promoter. Also responsible for recruiting RNA polymerase II to the pre-initiation complex (DNA-TBP-TFIIB). The protein is Transcription initiation factor IIB 4 of Halobacterium salinarum (strain ATCC 700922 / JCM 11081 / NRC-1) (Halobacterium halobium).